Consider the following 348-residue polypeptide: Replication-associated protein (348 aa).

The span at 1-17 shows a compositional bias: low complexity; it reads MRAPASSAASNRPGPSN. The segment at 1–22 is disordered; the sequence is MRAPASSAASNRPGPSNHPTPR. The CRESS-DNA virus Rep endonuclease domain occupies 22–125; the sequence is RWNSKQFFLT…NGDSDEMGEL (104 aa). Residues 29–32 carry the RCR-1 motif; that stretch reads FLTY. A divalent metal cation contacts are provided by E63, H71, and H73. The RCR-2 motif lies at 71 to 73; that stretch reads HLH. The For DNA cleavage activity role is filled by Y111. An RCR-3 motif is present at residues 111 to 114; that stretch reads YISK. The oligomerization stretch occupies residues 176 to 188; it reads SAAALFTEPPPVY. 228-235 contributes to the ATP binding site; the sequence is GPSRTGKT. Positions 251-269 are transactivation; sequence VDFTHYDKDAIYNVIDDVP. A Nuclear localization signal motif is present at residues 291-301; it reads KYGKKKKIPGG.

The protein belongs to the geminiviridae Rep protein family. Homooligomer. Rep binds to repeated DNA motifs (iterons). Forms the O-complex, which is a Rep-DNA complex involved in the initiation of RCR. Part of the C- and V-complexes which are RepA-Rep-DNA complexes involved in the c-sense and v-sense transcription. Mg(2+) serves as cofactor. The cofactor is Mn(2+).

Its subcellular location is the host nucleus. In terms of biological role, essential for the replication of viral ssDNA. The closed circular ssDNA genome is first converted to a superhelical dsDNA. Rep binds a specific region at the genome origin of replication. It introduces an endonucleolytic nick within the conserved sequence 5'-TAATATTAC-3' in the intergenic region of the genome present in all geminiviruses, thereby initiating the rolling circle replication (RCR). Following cleavage, binds covalently to the 5'-phosphate of DNA as a tyrosyl ester. The cleavage gives rise to a free 3'-OH that serves as a primer for the cellular DNA polymerase. The polymerase synthesizes the (+) strand DNA by rolling circle mechanism. After one round of replication, a Rep-catalyzed nucleotidyl transfer reaction releases a circular single-stranded virus genome, thereby terminating the replication. Displays origin-specific DNA cleavage, nucleotidyl transferase, ATPase and helicase activities. Acts as an inhibitor of C-sense gene transcription. This is Replication-associated protein from Miscanthus streak virus (isolate 91) (MiSV).